The chain runs to 456 residues: tRNA modification GTPase MnmE (456 aa).

(6S)-5-formyl-5,6,7,8-tetrahydrofolate-binding residues include Arg-23, Glu-80, and Lys-122. A TrmE-type G domain is found at 218–380; that stretch reads AKRIVIVGPP…LKKHLSNRQK (163 aa). Asn-228 is a K(+) binding site. GTP-binding positions include 228–233, 247–253, and 272–275; these read NAGKSS, TDLPGTT, and DTAG. Ser-232 lines the Mg(2+) pocket. Thr-247, Leu-249, and Thr-252 together coordinate K(+). Mg(2+) is bound at residue Thr-253. Lys-456 lines the (6S)-5-formyl-5,6,7,8-tetrahydrofolate pocket.

Belongs to the TRAFAC class TrmE-Era-EngA-EngB-Septin-like GTPase superfamily. TrmE GTPase family. As to quaternary structure, homodimer. Heterotetramer of two MnmE and two MnmG subunits. It depends on K(+) as a cofactor.

The protein localises to the cytoplasm. Functionally, exhibits a very high intrinsic GTPase hydrolysis rate. Involved in the addition of a carboxymethylaminomethyl (cmnm) group at the wobble position (U34) of certain tRNAs, forming tRNA-cmnm(5)s(2)U34. The sequence is that of tRNA modification GTPase MnmE from Buchnera aphidicola subsp. Schizaphis graminum (strain Sg).